The following is a 488-amino-acid chain: Ribulose bisphosphate carboxylase large chain (488 aa).

Substrate is bound by residues asparagine 127 and threonine 177. Lysine 179 serves as the catalytic Proton acceptor. Position 181 (lysine 181) interacts with substrate. The Mg(2+) site is built by lysine 205, aspartate 207, and glutamate 208. Lysine 205 carries the N6-carboxylysine modification. The Proton acceptor role is filled by histidine 297. The substrate site is built by arginine 298, histidine 330, and serine 382.

It belongs to the RuBisCO large chain family. Type I subfamily. Heterohexadecamer of 8 large chains and 8 small chains. Mg(2+) serves as cofactor.

The protein localises to the plastid. The protein resides in the chloroplast. It catalyses the reaction 2 (2R)-3-phosphoglycerate + 2 H(+) = D-ribulose 1,5-bisphosphate + CO2 + H2O. The catalysed reaction is D-ribulose 1,5-bisphosphate + O2 = 2-phosphoglycolate + (2R)-3-phosphoglycerate + 2 H(+). RuBisCO catalyzes two reactions: the carboxylation of D-ribulose 1,5-bisphosphate, the primary event in carbon dioxide fixation, as well as the oxidative fragmentation of the pentose substrate in the photorespiration process. Both reactions occur simultaneously and in competition at the same active site. This is Ribulose bisphosphate carboxylase large chain from Cyanidium caldarium (Red alga).